Here is a 569-residue protein sequence, read N- to C-terminus: Mitogen-activated protein kinase 8 (569 aa).

In terms of domain architecture, Protein kinase spans 13–304 (YKIQEVIGKG…AEEALADPYF (292 aa)). Residues 19–27 (IGKGSYGVV) and Lys42 each bind ATP. Asp139 acts as the Proton acceptor in catalysis. Thr175 is subject to Phosphothreonine. The short motif at 175-177 (TDY) is the TXY element. A Phosphotyrosine modification is found at Tyr177. Residues 404–432 (TTVHSAPIPPKDHQNITSQVPQRIPGRTG) form a disordered region.

Belongs to the protein kinase superfamily. CMGC Ser/Thr protein kinase family. MAP kinase subfamily. In terms of processing, dually phosphorylated on Thr-175 and Tyr-177, which activates the enzyme. In terms of tissue distribution, expressed in leaves and panicles.

The enzyme catalyses L-seryl-[protein] + ATP = O-phospho-L-seryl-[protein] + ADP + H(+). It carries out the reaction L-threonyl-[protein] + ATP = O-phospho-L-threonyl-[protein] + ADP + H(+). With respect to regulation, activated by threonine and tyrosine phosphorylation. In Oryza sativa subsp. japonica (Rice), this protein is Mitogen-activated protein kinase 8 (MPK8).